The following is a 794-amino-acid chain: Zinc finger protein 148 (794 aa).

A Glycyl lysine isopeptide (Lys-Gly) (interchain with G-Cter in SUMO2) cross-link involves residue lysine 6. The residue at position 51 (serine 51) is a Phosphoserine. Glycyl lysine isopeptide (Lys-Gly) (interchain with G-Cter in SUMO2) cross-links involve residues lysine 88, lysine 115, and lysine 132. The C2H2-type 1 zinc finger occupies 171 to 193 (HVCEHCNAAFRTNYHLQRHVFIH). Threonine 194 is subject to Phosphothreonine. 2 C2H2-type zinc fingers span residues 199–221 (FQCS…EKIH) and 227–249 (FRCD…KRTH). The residue at position 250 (serine 250) is a Phosphoserine. The segment at 255-278 (YQCEYCLQYFSRTDRVLKHKRMCH) adopts a C2H2-type 4 zinc-finger fold. Lysine 291 is covalently cross-linked (Glycyl lysine isopeptide (Lys-Gly) (interchain with G-Cter in SUMO2)). The tract at residues 298–336 (EEDSGFSTSPKDNSLPKKKRQKTEKKSSGMDKESALDKS) is disordered. Residues serine 301 and serine 306 each carry the phosphoserine modification. Residue lysine 308 forms a Glycyl lysine isopeptide (Lys-Gly) (interchain with G-Cter in SUMO2) linkage. Residues 321–336 (EKKSSGMDKESALDKS) show a composition bias toward basic and acidic residues. Lysine 356 participates in a covalent cross-link: Glycyl lysine isopeptide (Lys-Gly) (interchain with G-Cter in SUMO1); alternate. Lysine 356 is covalently cross-linked (Glycyl lysine isopeptide (Lys-Gly) (interchain with G-Cter in SUMO2); alternate). Lysine 402 is covalently cross-linked (Glycyl lysine isopeptide (Lys-Gly) (interchain with G-Cter in SUMO2)). Phosphoserine is present on serine 412. Glycyl lysine isopeptide (Lys-Gly) (interchain with G-Cter in SUMO2) cross-links involve residues lysine 421 and lysine 424. Polar residues predominate over residues 574-588 (NSSEVPEVTPSENVG). Residues 574-596 (NSSEVPEVTPSENVGSSSQASSS) are disordered. An N6-acetyllysine modification is found at lysine 607. A phosphoserine mark is found at serine 665 and serine 784.

The protein belongs to the krueppel C2H2-type zinc-finger protein family. As to quaternary structure, interacts with HNRNPDL. Interacts with the 5FMC complex; the interaction requires association with CHTOP. Interacts with CAVIN1. Post-translationally, sumoylated with SUMO2. Desumoylated by SENP3, resulting in the stimulation of transcription of its target genes.

It is found in the nucleus. Functionally, involved in transcriptional regulation. Represses the transcription of a number of genes including gastrin, stromelysin and enolase. Binds to the G-rich box in the enhancer region of these genes. This chain is Zinc finger protein 148 (ZNF148), found in Homo sapiens (Human).